The sequence spans 434 residues: Nicotinate phosphoribosyltransferase (434 aa).

Histidine 242 is subject to Phosphohistidine; by autocatalysis.

It belongs to the NAPRTase family. Post-translationally, transiently phosphorylated on a His residue during the reaction cycle. Phosphorylation strongly increases the affinity for substrates and increases the rate of nicotinate D-ribonucleotide production. Dephosphorylation regenerates the low-affinity form of the enzyme, leading to product release.

It carries out the reaction nicotinate + 5-phospho-alpha-D-ribose 1-diphosphate + ATP + H2O = nicotinate beta-D-ribonucleotide + ADP + phosphate + diphosphate. Its pathway is cofactor biosynthesis; NAD(+) biosynthesis; nicotinate D-ribonucleotide from nicotinate: step 1/1. In terms of biological role, catalyzes the synthesis of beta-nicotinate D-ribonucleotide from nicotinate and 5-phospho-D-ribose 1-phosphate at the expense of ATP. This Brucella canis (strain ATCC 23365 / NCTC 10854 / RM-666) protein is Nicotinate phosphoribosyltransferase.